The chain runs to 313 residues: Ribonuclease HIII (313 aa).

Positions 62-88 are disordered; that stretch reads AERWTADAETPAPKKPASKKSIPSVYQ. The RNase H type-2 domain maps to 96 to 312; that stretch reads MSVIGSDEVG…TQKAKRIASK (217 aa). A divalent metal cation is bound by residues aspartate 102, glutamate 103, and aspartate 207.

It belongs to the RNase HII family. RnhC subfamily. Requires Mn(2+) as cofactor. Mg(2+) serves as cofactor.

The protein localises to the cytoplasm. It catalyses the reaction Endonucleolytic cleavage to 5'-phosphomonoester.. In terms of biological role, endonuclease that specifically degrades the RNA of RNA-DNA hybrids. In Bacillus licheniformis (strain ATCC 14580 / DSM 13 / JCM 2505 / CCUG 7422 / NBRC 12200 / NCIMB 9375 / NCTC 10341 / NRRL NRS-1264 / Gibson 46), this protein is Ribonuclease HIII.